The primary structure comprises 75 residues: uncharacterized protein (75 aa).

The region spanning 3 to 45 (TTVFLSNRSQAVRLPKAVALPENVKRVEVIAVGRTRIITPAGE) is the SpoVT-AbrB domain.

The protein belongs to the VapB family.

This is an uncharacterized protein from Escherichia coli (strain K12).